Consider the following 282-residue polypeptide: Parvulin-like PPIase (282 aa).

The N-terminal stretch at 1 to 20 (MKKLSVIFLSVSMLSGIAFA) is a signal peptide. Positions 138 to 231 (KEQIKVAHIL…FGWHIIKVLE (94 aa)) constitute a PpiC domain.

The protein belongs to the PpiC/parvulin rotamase family.

Its subcellular location is the cell outer membrane. The catalysed reaction is [protein]-peptidylproline (omega=180) = [protein]-peptidylproline (omega=0). This Rickettsia conorii (strain ATCC VR-613 / Malish 7) protein is Parvulin-like PPIase (plp).